A 265-amino-acid polypeptide reads, in one-letter code: Undecaprenyl-diphosphatase (265 aa).

The next 8 membrane-spanning stretches (helical) occupy residues 14-34 (GLGE…PWLF), 40-60 (SLVF…VYFW), 79-99 (GKLF…GYLF), 112-132 (LLIA…DSIA), 141-161 (MNVF…FPGI), 182-202 (AKFS…VSLL), 217-237 (IGFF…LGIV), and 242-262 (FKIF…FYLL).

Belongs to the UppP family.

The protein resides in the cell membrane. It carries out the reaction di-trans,octa-cis-undecaprenyl diphosphate + H2O = di-trans,octa-cis-undecaprenyl phosphate + phosphate + H(+). Catalyzes the dephosphorylation of undecaprenyl diphosphate (UPP). Confers resistance to bacitracin. The polypeptide is Undecaprenyl-diphosphatase (Caldicellulosiruptor bescii (strain ATCC BAA-1888 / DSM 6725 / KCTC 15123 / Z-1320) (Anaerocellum thermophilum)).